Reading from the N-terminus, the 1069-residue chain is ISWI chromatin-remodeling complex ATPase CHR17 (1069 aa).

Over residues 1–10 the composition is skewed to basic and acidic residues; sequence MARASKREVS. 2 disordered regions span residues 1-93 and 136-168; these read MARA…KEMQ and FAKSDPSPSQKKGKGRGRHSSKLTEEEEDEECL. Composition is skewed to acidic residues over residues 15–37 and 45–78; these read YSSEEEEQVNDQANVEEDDDELE and SDEEDVAPDEAPVSDDEVVPVEDDAEEDEEDEEK. Basic and acidic residues predominate over residues 79–93; the sequence is AEISKREKARLKEMQ. Residues 146–156 show a composition bias toward basic residues; that stretch reads KKGKGRGRHSS. One can recognise a Helicase ATP-binding domain in the interval 206–371; it reads IRLYENGING…WALLNFLLPE (166 aa). ATP is bound at residue 219 to 226; it reads DEMGLGKT. The DEAH box motif lies at 322-325; sequence DEAH. The Helicase C-terminal domain maps to 499–650; sequence LLDKLLPKLK…ALVIQQGRLA (152 aa). 2 SANT domains span residues 845–897 and 946–1007; these read EGFS…VRYK and QNKG…DTLI. Positions 1016 to 1069 are disordered; that stretch reads EFDERERQARKEKKLSKSATPSKRPSGRQANESPSSLLKKRKQLSMDDYGKRRK. A compositionally biased stretch (polar residues) spans 1032–1051; sequence KSATPSKRPSGRQANESPSS. Residues 1059–1069 show a composition bias toward basic and acidic residues; the sequence is LSMDDYGKRRK.

The protein belongs to the SNF2/RAD54 helicase family. ISWI subfamily. Interacts with RLT1. Binds to FGT1. In terms of tissue distribution, highly expressed in growing tissues such as inflorescence and flower meristems, young leaves and floral organs. Expressed in roots, rosette and cauline leaves, stems, flowers, inflorescences and siliques.

The protein localises to the nucleus. In terms of biological role, possesses intrinsic ATP-dependent nucleosome-remodeling activity. Constitutes the catalytic subunit of several complexes capable of forming ordered nucleosome arrays on chromatin. Involved in the formation of nucleosome distribution patterns. Required for the maintenance of the plant vegetative phase. In association with RLT1 or RLT2 may prevent the early activation of the vegetative-to-reproductive transition by regulating key genes that contribute to flower timing, such as FT, SEP1, SEP3, AGL8/FUL, SOC1 and FLC. Necessary to acquire heat stress (HS) memory. This chain is ISWI chromatin-remodeling complex ATPase CHR17, found in Arabidopsis thaliana (Mouse-ear cress).